The following is a 200-amino-acid chain: Oligoribonuclease (200 aa).

One can recognise an Exonuclease domain in the interval 20–183; sequence LVWLDMEMTG…ADIHESIDEL (164 aa). Tyr141 is a catalytic residue.

The protein belongs to the oligoribonuclease family.

The protein resides in the cytoplasm. Functionally, 3'-to-5' exoribonuclease specific for small oligoribonucleotides. This is Oligoribonuclease from Burkholderia vietnamiensis (strain G4 / LMG 22486) (Burkholderia cepacia (strain R1808)).